The sequence spans 618 residues: Matrix metalloproteinase-24 (618 aa).

An N-terminal signal peptide occupies residues 1-41 (MPRSRGGRAAPGQASRWSGWRAPGRLLPLLPALCCLAAAAG). A propeptide spanning residues 42-128 (AGKPAGADAP…HLSRRRRNKR (87 aa)) is cleaved from the precursor. The Extracellular segment spans residues 42 to 575 (AGKPAGADAP…IDDVPGSVNA (534 aa)). The Cysteine switch motif lies at 110 to 117 (PRCGVPDH). Zn(2+) is bound by residues Cys112 and His255. Glu256 is a catalytic residue. His259 and His265 together coordinate Zn(2+). Residues 296–352 (QKIYGPPAEPLEPTRPLPTLPVRRIHSPSERKHERHPRPPRPPLGDRPSTPGAKPNI) form a disordered region. Residues 302–314 (PAEPLEPTRPLPT) are compositionally biased toward pro residues. 4 Hemopexin repeats span residues 350-398 (PNIC…WKGL), 399-444 (PARI…GSCL), 446-494 (REGI…KGIP), and 495-542 (QAPQ…WMGC). A disulfide bond links Cys353 and Cys542. Residues 576–596 (VAVVVPCTLSLCLLVLLYTIF) form a helical membrane-spanning segment. The Cytoplasmic segment spans residues 597–618 (QFKNKAGPQPVTYYKRPVQEWV). A PDZ-binding motif is present at residues 616-618 (EWV).

This sequence belongs to the peptidase M10A family. Interacts with GRIP1 and GRIP2. Interacts (via PDZ-binding motif) with APBA3 (via PDZ domain). Requires Zn(2+) as cofactor. Ca(2+) serves as cofactor. Cleaved by a furin endopeptidase in the trans-Golgi network. Mainly expressed in neuronal cells of both central and peripheral nervous systems. Expressed by CGRP-containing peptidergic nociceptors in dorsal root ganglia. Expressed in adult neural stem cell and ependymocytes. Expressed at low level in testis.

It is found in the cell membrane. The protein localises to the golgi apparatus. The protein resides in the trans-Golgi network membrane. It localises to the secreted. Its subcellular location is the extracellular space. It is found in the extracellular matrix. Metalloprotease that mediates cleavage of N-cadherin (CDH2) and acts as a regulator of neuro-immune interactions and neural stem cell quiescence. Involved in cell-cell interactions between nociceptive neurites and mast cells, possibly by mediating cleavage of CDH2, thereby acting as a mediator of peripheral thermal nociception and inflammatory hyperalgesia. Key regulator of neural stem cells quiescence by mediating cleavage of CDH2, affecting CDH2-mediated anchorage of neural stem cells to ependymocytes in the adult subependymal zone, leading to modulate their quiescence. May play a role in axonal growth. Able to activate progelatinase A. May also be a proteoglycanase involved in degradation of proteoglycans, such as dermatan sulfate and chondroitin sulfate proteoglycans. Cleaves partially fibronectin, but not collagen type I, nor laminin. This chain is Matrix metalloproteinase-24 (Mmp24), found in Mus musculus (Mouse).